A 555-amino-acid polypeptide reads, in one-letter code: Sulfite reductase [ferredoxin] (555 aa).

Residues 1 to 22 are disordered; that stretch reads MTTARPAKARNEGQWALGHREP. Positions 69 to 161 form a cross-link, 3'-(S-cysteinyl)-tyrosine (Tyr-Cys); that stretch reads YTQREQGYDG…DVGLQTTEAC (93 aa). 4 residues coordinate [4Fe-4S] cluster: C417, C423, C463, and C467. C467 serves as a coordination point for siroheme.

The protein belongs to the nitrite and sulfite reductase 4Fe-4S domain family. In terms of assembly, monomer. Siroheme serves as cofactor. The cofactor is [4Fe-4S] cluster.

The catalysed reaction is hydrogen sulfide + 6 oxidized [2Fe-2S]-[ferredoxin] + 3 H2O = sulfite + 6 reduced [2Fe-2S]-[ferredoxin] + 7 H(+). In terms of biological role, catalyzes the reduction of sulfite to sulfide, a step in the biosynthesis of sulfur-containing amino acids and cofactors. The protein is Sulfite reductase [ferredoxin] (sir) of Mycobacterium bovis (strain ATCC BAA-935 / AF2122/97).